Consider the following 285-residue polypeptide: Foldase protein PrsA 2 (285 aa).

The first 20 residues, 1–20 (MRGKHIFIITALISILMLAA), serve as a signal peptide directing secretion. Residue cysteine 21 is the site of N-palmitoyl cysteine attachment. Residue cysteine 21 is the site of S-diacylglycerol cysteine attachment. The PpiC domain maps to 134 to 224 (KPEIKASHIL…NGYHIIKLTG (91 aa)).

This sequence belongs to the PrsA family.

The protein resides in the cell membrane. It catalyses the reaction [protein]-peptidylproline (omega=180) = [protein]-peptidylproline (omega=0). Its function is as follows. Plays a major role in protein secretion by helping the post-translocational extracellular folding of several secreted proteins. Important for the secretion of the protective antigen. The three PsrA proteins in this organism show different but overlapping substrate specificities. This is Foldase protein PrsA 2 (prsA2) from Bacillus anthracis.